The sequence spans 259 residues: uncharacterized protein (259 aa).

6 consecutive transmembrane segments (helical) span residues 9-31 (ILSVLTLFIFFQYVAKFGILESL), 84-106 (LLGGEILDGLAFGFFFLVYLQWF), 126-148 (FLIYRFAITLFGSTICFYRFVFG), 153-175 (SIVAGILTFALFLSQRALNLEYV), 196-215 (HFILSAPAMGVGATAGYIAA), and 230-252 (TFRAFLLLTIVVVCILTLGSWLG).

The protein localises to the cell membrane. This is an uncharacterized protein from Archaeoglobus fulgidus (strain ATCC 49558 / DSM 4304 / JCM 9628 / NBRC 100126 / VC-16).